Here is a 99-residue protein sequence, read N- to C-terminus: UPF0751 protein BCAH820_B0138 (99 aa).

This sequence belongs to the UPF0751 family.

This chain is UPF0751 protein BCAH820_B0138, found in Bacillus cereus (strain AH820).